Here is a 152-residue protein sequence, read N- to C-terminus: Natriuretic peptides A (152 aa).

Residues 1–24 (MGSSAITVSFLLFLAFQLPGQTGA) form the signal peptide. 2 consecutive propeptides follow at residues 25–122 (NPVY…TAPR) and 92–102 (EGGVLGRGPWE). The disordered stretch occupies residues 58-101 (PSQVLSEQNEEAGAPLSPLSEMPPWMGEVNPAQREGGVLGRGPW). A Phosphoserine modification is found at serine 128. Cysteine 129 and cysteine 145 are disulfide-bonded. Positions 146 to 150 (NSFRY) are important for degradation of atrial natriuretic peptide by IDE.

It belongs to the natriuretic peptide family. As to quaternary structure, homodimer; disulfide-linked antiparallel dimer. Post-translationally, the precursor molecule is proteolytically cleaved by CORIN at Arg-122 to produce the atrial natriuretic peptide. Undergoes further proteolytic cleavage by unknown proteases to give rise to long-acting natriuretic peptide, vessel dilator and kaliuretic peptide. Additional processing gives rise to the auriculin and atriopeptin peptides. In the kidneys, alternative processing by an unknown protease results in the peptide urodilatin. Cleavage by MME initiates degradation of the factor and thereby regulates its activity. Degradation by IDE results in reduced activation of NPR1 (in vitro). During IDE degradation, the resulting products can temporarily stimulate NPR2 to produce cGMP, before the fragments are completely degraded and inactivated by IDE (in vitro). In terms of processing, degraded by IDE. Post-translationally, phosphorylation on Ser-128 decreases vasorelaxant activity.

It is found in the secreted. The protein resides in the perikaryon. Its subcellular location is the cell projection. In terms of biological role, hormone that plays a key role in mediating cardio-renal homeostasis, and is involved in vascular remodeling and regulating energy metabolism. Acts by specifically binding and stimulating NPR1 to produce cGMP, which in turn activates effector proteins, such as PRKG1, that drive various biological responses. Regulates vasodilation, natriuresis, diuresis and aldosterone synthesis and is therefore essential for regulating blood pressure, controlling the extracellular fluid volume and maintaining the fluid-electrolyte balance. Also involved in inhibiting cardiac remodeling and cardiac hypertrophy by inducing cardiomyocyte apoptosis and attenuating the growth of cardiomyocytes and fibroblasts. Plays a role in female pregnancy by promoting trophoblast invasion and spiral artery remodeling in uterus, and thus prevents pregnancy-induced hypertension. In adipose tissue, acts in various cGMP- and PKG-dependent pathways to regulate lipid metabolism and energy homeostasis. This includes up-regulating lipid metabolism and mitochondrial oxygen utilization by activating the AMP-activated protein kinase (AMPK), and increasing energy expenditure by acting via MAPK11 to promote the UCP1-dependent thermogenesis of brown adipose tissue. Binds the clearance receptor NPR3 which removes the hormone from circulation. Its function is as follows. May have a role in cardio-renal homeostasis through regulation of natriuresis, diuresis, vasodilation, and inhibiting aldosterone synthesis. In vitro, promotes the production of cGMP and induces vasodilation. May promote natriuresis, at least in part, by enhancing prostaglandin E2 synthesis resulting in the inhibition of renal Na+-K+-ATPase. However reports on the involvement of this peptide in mammal blood volume and blood pressure homeostasis are conflicting; according to a report, in vivo it is not sufficient to activate cGMP and does not inhibit collecting duct transport nor effect diuresis and natriuresis. Appears to bind to specific receptors that are distinct from the receptors bound by atrial natriuretic peptide and vessel dilator. Possibly enhances protein excretion in urine by decreasing proximal tubular protein reabsorption. May have a role in cardio-renal homeostasis through regulation of natriuresis, diuresis, and vasodilation. In vitro, promotes the production of cGMP and induces vasodilation. May promote natriuresis, at least in part, by enhancing prostaglandin E2 synthesis resulting in the inhibition of renal Na+-K+-ATPase. However reports on the involvement of this peptide in mammal blood volume and blood pressure homeostasis are conflicting; according to a report it is not sufficient to activate cGMP and does not inhibit collecting duct transport nor effect diuresis and natriuresis. Appears to bind to specific receptors that are distinct from the receptors bound by the atrial natriuretic and long-acting natriuretic peptides. Possibly functions in protein excretion in urine by maintaining the integrity of the proximal tubules and enhancing protein excretion by decreasing proximal tubular protein reabsorption. Functionally, may have a role in cardio-renal homeostasis through regulation of diuresis and inhibiting aldosterone synthesis. In vitro, promotes the production of cGMP and induces vasodilation. May promote natriuresis, at least in part, by enhancing prostaglandin E2 synthesis resulting in the inhibition of renal Na+-K+-ATPase. May have a role in potassium excretion but not sodium excretion (natriuresis). Possibly enhances protein excretion in urine by decreasing proximal tubular protein reabsorption. In terms of biological role, hormone produced in the kidneys that appears to be important for maintaining cardio-renal homeostasis. Mediates vasodilation, natriuresis and diuresis primarily in the renal system, in order to maintain the extracellular fluid volume and control the fluid-electrolyte balance. Specifically binds and stimulates cGMP production by renal transmembrane receptors, likely NPR1. Urodilatin not ANP, may be the natriuretic peptide responsible for the regulation of sodium and water homeostasis in the kidney. Its function is as follows. May have a role in cardio-renal homeostasis through regulation of natriuresis and vasodilation. In vivo promotes natriuresis and in vitro, vasodilates renal artery strips. May have a role in cardio-renal homeostasis through regulation of regulation of natriuresis and vasodilation. In vivo promotes natriuresis. In vitro, vasodilates intestinal smooth muscle but not smooth muscle strips. Functionally, may have a role in cardio-renal homeostasis through regulation of natriuresis and vasodilation. In vivo promotes natriuresis. In vitro, selectively vasodilates intestinal and vascular smooth muscle strips. In terms of biological role, may have a role in cardio-renal homeostasis through regulation of natriuresis and vasodilation. In vivo promotes natriuresis. In vitro, selectively vasodilates intestinal smooth muscle but not vascular smooth muscle strips. In Bos taurus (Bovine), this protein is Natriuretic peptides A (NPPA).